Consider the following 299-residue polypeptide: Oxygen-dependent coproporphyrinogen-III oxidase (299 aa).

Residue serine 92 coordinates substrate. Positions 96 and 106 each coordinate a divalent metal cation. Histidine 106 serves as the catalytic Proton donor. 108 to 110 (NVR) is a binding site for substrate. A divalent metal cation-binding residues include histidine 145 and histidine 175. The segment at 240–275 (YVEFNLVWDRGTLFGLQTGGRTESILMSMPPLVRWE) is important for dimerization. Substrate is bound at residue 258-260 (GGR).

This sequence belongs to the aerobic coproporphyrinogen-III oxidase family. Homodimer. Requires a divalent metal cation as cofactor.

It localises to the cytoplasm. It catalyses the reaction coproporphyrinogen III + O2 + 2 H(+) = protoporphyrinogen IX + 2 CO2 + 2 H2O. It participates in porphyrin-containing compound metabolism; protoporphyrin-IX biosynthesis; protoporphyrinogen-IX from coproporphyrinogen-III (O2 route): step 1/1. Involved in the heme biosynthesis. Catalyzes the aerobic oxidative decarboxylation of propionate groups of rings A and B of coproporphyrinogen-III to yield the vinyl groups in protoporphyrinogen-IX. The protein is Oxygen-dependent coproporphyrinogen-III oxidase of Klebsiella pneumoniae subsp. pneumoniae (strain ATCC 700721 / MGH 78578).